Consider the following 164-residue polypeptide: Endoribonuclease YbeY (164 aa).

The Zn(2+) site is built by histidine 124, histidine 128, and histidine 134.

It belongs to the endoribonuclease YbeY family. Zn(2+) is required as a cofactor.

The protein localises to the cytoplasm. Single strand-specific metallo-endoribonuclease involved in late-stage 70S ribosome quality control and in maturation of the 3' terminus of the 16S rRNA. This is Endoribonuclease YbeY from Nitrosomonas europaea (strain ATCC 19718 / CIP 103999 / KCTC 2705 / NBRC 14298).